A 155-amino-acid chain; its full sequence is Transcriptional regulator MraZ (155 aa).

SpoVT-AbrB domains lie at 15–62 (TYEN…GMDR) and 93–136 (SEEL…NPTA).

Belongs to the MraZ family. As to quaternary structure, forms oligomers.

It localises to the cytoplasm. The protein resides in the nucleoid. The chain is Transcriptional regulator MraZ from Rhodospirillum rubrum (strain ATCC 11170 / ATH 1.1.1 / DSM 467 / LMG 4362 / NCIMB 8255 / S1).